A 440-amino-acid chain; its full sequence is Light-independent protochlorophyllide reductase subunit N (440 aa).

3 residues coordinate [4Fe-4S] cluster: Cys-15, Cys-40, and Cys-99.

This sequence belongs to the BchN/ChlN family. In terms of assembly, protochlorophyllide reductase is composed of three subunits; BchL, BchN and BchB. Forms a heterotetramer of two BchB and two BchN subunits. [4Fe-4S] cluster serves as cofactor.

The catalysed reaction is chlorophyllide a + oxidized 2[4Fe-4S]-[ferredoxin] + 2 ADP + 2 phosphate = protochlorophyllide a + reduced 2[4Fe-4S]-[ferredoxin] + 2 ATP + 2 H2O. The protein operates within porphyrin-containing compound metabolism; bacteriochlorophyll biosynthesis (light-independent). In terms of biological role, component of the dark-operative protochlorophyllide reductase (DPOR) that uses Mg-ATP and reduced ferredoxin to reduce ring D of protochlorophyllide (Pchlide) to form chlorophyllide a (Chlide). This reaction is light-independent. The NB-protein (BchN-BchB) is the catalytic component of the complex. This chain is Light-independent protochlorophyllide reductase subunit N, found in Heliobacterium mobile (Heliobacillus mobilis).